The primary structure comprises 289 residues: Aquaporin-2 (289 aa).

A disordered region spans residues 1–36; the sequence is MSNESNDLEKNISHLDPTGVDNAYIPPEQPETKHSR. The Cytoplasmic portion of the chain corresponds to 1–47; sequence MSNESNDLEKNISHLDPTGVDNAYIPPEQPETKHSRFNIDRDTLRNH. A helical transmembrane segment spans residues 48–68; the sequence is FIAAVGEFCGTFMFLWCAYVI. The Extracellular portion of the chain corresponds to 69-90; it reads CNVANHDVALTTEPEGSHPGQL. A helical membrane pass occupies residues 91–111; the sequence is IMIALGFGFSVMFSIWCFAGV. At 112–135 the chain is on the cytoplasmic side; sequence SGGALNPAVSLSLCLARAISPARC. The NPA 1 signature appears at 117–119; it reads NPA. Residues 136–156 form a helical membrane-spanning segment; the sequence is VVMWFPQIIAGMAAGGAASAM. At 157 to 175 the chain is on the extracellular side; sequence TPGKVLFTNALGLGCSRSR. The chain crosses the membrane as a helical span at residues 176–196; the sequence is GLFLEMFGTAVLCLTVLMTAV. At 197–202 the chain is on the cytoplasmic side; the sequence is EKRETN. A helical membrane pass occupies residues 203-223; it reads FMAALPIGISLFMAHMALTGY. Over 224–247 the chain is Extracellular; that stretch reads TGTGVNPARSLGAAVAARYFPHYH. The NPA 2 motif lies at 229-231; that stretch reads NPA. A helical membrane pass occupies residues 248-268; the sequence is WIYWIGPLLGAFLAWSVWQLL. Topologically, residues 269–289 are cytoplasmic; that stretch reads QILDYTTYVNAEKAAGQKKED.

Belongs to the MIP/aquaporin (TC 1.A.8) family.

It is found in the endoplasmic reticulum membrane. The protein localises to the cell membrane. Functionally, water channel required to facilitate the transport of water across membranes. Involved in freeze tolerance, osmotolerance and cell flocculation in liquid cultures. Is non-functional in most laboratory strains. This chain is Aquaporin-2 (AQY2), found in Saccharomyces cerevisiae (Baker's yeast).